We begin with the raw amino-acid sequence, 162 residues long: NADPH-dependent 7-cyano-7-deazaguanine reductase (162 aa).

C53 serves as the catalytic Thioimide intermediate. The active-site Proton donor is D60. Substrate is bound by residues 75 to 77 and 94 to 95; these read VES and HE.

The protein belongs to the GTP cyclohydrolase I family. QueF type 1 subfamily.

It is found in the cytoplasm. The catalysed reaction is 7-aminomethyl-7-carbaguanine + 2 NADP(+) = 7-cyano-7-deazaguanine + 2 NADPH + 3 H(+). It participates in tRNA modification; tRNA-queuosine biosynthesis. Its function is as follows. Catalyzes the NADPH-dependent reduction of 7-cyano-7-deazaguanine (preQ0) to 7-aminomethyl-7-deazaguanine (preQ1). This is NADPH-dependent 7-cyano-7-deazaguanine reductase from Streptococcus mutans serotype c (strain ATCC 700610 / UA159).